A 249-amino-acid polypeptide reads, in one-letter code: Derlin-2 (249 aa).

Residues 1 to 21 (MAQAVEEWYRQMPIITRSYLT) lie on the Cytoplasmic side of the membrane. Residues 22–42 (AAVVTTVGCTLEIISPYHLYL) traverse the membrane as a helical segment. Residues 43-96 (NPKLVVQHYEIWRLVTNFLYFRKMDLDFLFHMFFLARYCKLLEENSFRGRTADF) lie on the Lumenal side of the membrane. Residues 97–117 (FYMLLFGATVLTGIVLIGGMI) traverse the membrane as a helical segment. The Cytoplasmic segment spans residues 118 to 122 (PYISE). The chain crosses the membrane as a helical span at residues 123–143 (TFARILFLSNSLTFMMVYVWS). The Lumenal portion of the chain corresponds to 144-152 (KHNPFIHMS). The helical transmembrane segment at 153-173 (FLGLFTFTAAYLPWVLLGFSI) threads the bilayer. Residues 174–249 (LVGSSTWVDL…GAMGADPQAQ (76 aa)) are Cytoplasmic-facing.

This sequence belongs to the derlin family.

Its subcellular location is the endoplasmic reticulum membrane. May be involved in the degradation process of specific misfolded endoplasmic reticulum (ER) luminal proteins. The protein is Derlin-2 (DER2) of Oryza sativa subsp. japonica (Rice).